The following is an 847-amino-acid chain: Glycogen phosphorylase, liver form (847 aa).

N-acetylalanine is present on Ala2. Ser15 carries the phosphoserine; by PHK; in form phosphorylase a modification. AMP-binding positions include 43-45, Tyr76, and Arg310; that span reads DRN. Lys364 carries the N6-succinyllysine modification. The residue at position 470 (Lys470) is an N6-acetyllysine. Phosphoserine is present on residues Ser524, Ser561, and Ser639. An N6-(pyridoxal phosphate)lysine modification is found at Lys681. At Lys796 the chain carries N6-acetyllysine.

This sequence belongs to the glycogen phosphorylase family. Homodimer; enzymatically active. Interacts with PPP1R3B; recruits the phosphatase PP1 which dephosphorylates and inactivates PYGL/glycogen phosphorylase. It depends on pyridoxal 5'-phosphate as a cofactor. In terms of processing, acetylation, which is up-regulated by glucose and insulin and down-regulated by glucagon, inhibits the glycogen phosphorylase activity by promoting PPP1R3B-mediated recruitment of phosphatase PP1 and Ser-15 dephosphorylation. Post-translationally, phosphorylation at Ser-15 converts inactive phosphorylase b into active phosphorylase a. Dephosphorylation of Ser-15 by phosphatase PP1 inactivates the enzyme.

Its subcellular location is the cytoplasm. It localises to the cytosol. The enzyme catalyses [(1-&gt;4)-alpha-D-glucosyl](n) + phosphate = [(1-&gt;4)-alpha-D-glucosyl](n-1) + alpha-D-glucose 1-phosphate. With respect to regulation, allosterically regulated through the non-covalent binding of metabolites, being activated by AMP and inhibited by ATP, ADP, and glucose-6-phosphate. The activity is also controlled by post-translational modifications including phosphorylation and acetylation. In terms of biological role, allosteric enzyme that catalyzes the rate-limiting step in glycogen catabolism, the phosphorolytic cleavage of glycogen to produce glucose-1-phosphate, and plays a central role in maintaining cellular and organismal glucose homeostasis. The sequence is that of Glycogen phosphorylase, liver form from Homo sapiens (Human).